The sequence spans 514 residues: Type-2 serine--tRNA ligase (514 aa).

An L-serine-binding site is contributed by Ala-313. Cys-315 serves as a coordination point for Zn(2+). Arg-344 is an L-serine binding site. Residues 344–346 (RWE) and 355–356 (RV) each bind ATP. 361–363 (RGE) contacts L-serine. Positions 363 and 470 each coordinate Zn(2+). Position 477 (Arg-477) interacts with ATP.

It belongs to the class-II aminoacyl-tRNA synthetase family. Type-2 seryl-tRNA synthetase subfamily. In terms of assembly, homodimer. Zn(2+) serves as cofactor.

The protein localises to the cytoplasm. It carries out the reaction tRNA(Ser) + L-serine + ATP = L-seryl-tRNA(Ser) + AMP + diphosphate + H(+). The enzyme catalyses tRNA(Sec) + L-serine + ATP = L-seryl-tRNA(Sec) + AMP + diphosphate + H(+). It functions in the pathway aminoacyl-tRNA biosynthesis; selenocysteinyl-tRNA(Sec) biosynthesis; L-seryl-tRNA(Sec) from L-serine and tRNA(Sec): step 1/1. In terms of biological role, catalyzes the attachment of serine to tRNA(Ser). Is also able to aminoacylate tRNA(Sec) with serine, to form the misacylated tRNA L-seryl-tRNA(Sec), which will be further converted into selenocysteinyl-tRNA(Sec). The sequence is that of Type-2 serine--tRNA ligase (serS) from Methanococcus maripaludis (strain DSM 14266 / JCM 13030 / NBRC 101832 / S2 / LL).